The primary structure comprises 311 residues: MQAPPPEHCPGVESEQAGRVSACAGCPNQSICSDPTKKLEDPGKALVAAAMKDVKHKLLILSGKGGVGKSTVTTLLTRYLARSCPDNNFGVLDIDICGPSQPRLLGALGENVHQSGSGWSPVGIDDNVCLMSIGFLLSSVDDAIIWRGPKKNGMIRQFLSEVDWGNLDLLLLDTPPGTSDEHLSVCTYLRDDSAPKDSLSAIIVTTPQEVALLDVRKEINFCRKQRIPILGVIENMSSFRCGHCGNSSDIFPAKTGGAAAMCAEMEVPLLGSLPLDPRVTRACDAGEDITAMKSETTDALAAICSKIMSSF.

Residues C9, C23, C26, and C32 each contribute to the [4Fe-4S] cluster site. Position 63–70 (63–70) interacts with ATP; sequence GKGGVGKS. C241 and C244 together coordinate [4Fe-4S] cluster.

This sequence belongs to the Mrp/NBP35 ATP-binding proteins family. NUBP1/NBP35 subfamily. As to quaternary structure, heterotetramer of 2 Nubp1 and 2 Nubp2 chains. It depends on [4Fe-4S] cluster as a cofactor.

It localises to the cytoplasm. Its function is as follows. Component of the cytosolic iron-sulfur (Fe/S) protein assembly (CIA) machinery. Required for maturation of extramitochondrial Fe-S proteins. The Nubp1-Nubp2 heterotetramer forms a Fe-S scaffold complex, mediating the de novo assembly of an Fe-S cluster and its transfer to target apoproteins. This Drosophila grimshawi (Hawaiian fruit fly) protein is Cytosolic Fe-S cluster assembly factor Nubp1 homolog.